Consider the following 210-residue polypeptide: FMN-dependent NADH:quinone oxidoreductase (210 aa).

Residues 17-19 (SCS) and 148-151 (SSGG) each bind FMN.

This sequence belongs to the azoreductase type 1 family. As to quaternary structure, homodimer. It depends on FMN as a cofactor.

It carries out the reaction 2 a quinone + NADH + H(+) = 2 a 1,4-benzosemiquinone + NAD(+). The catalysed reaction is N,N-dimethyl-1,4-phenylenediamine + anthranilate + 2 NAD(+) = 2-(4-dimethylaminophenyl)diazenylbenzoate + 2 NADH + 2 H(+). In terms of biological role, quinone reductase that provides resistance to thiol-specific stress caused by electrophilic quinones. Its function is as follows. Also exhibits azoreductase activity. Catalyzes the reductive cleavage of the azo bond in aromatic azo compounds to the corresponding amines. This chain is FMN-dependent NADH:quinone oxidoreductase, found in Geotalea uraniireducens (strain Rf4) (Geobacter uraniireducens).